The primary structure comprises 40 residues: Serine proteinase-like BMK-CBP (40 aa).

Residues 1-40 (IFGGTFAKNGEYPWMVVIDLPEFACGGVLISKKFVLTAAH) form the Peptidase S1 domain. The active-site Charge relay system is the H40.

Belongs to the peptidase S1 family. In terms of tissue distribution, expressed by the venom gland.

It localises to the secreted. Binds in a dose-dependent manner to the breast cancer cell line MCF-7. This is Serine proteinase-like BMK-CBP from Olivierus martensii (Manchurian scorpion).